A 231-amino-acid polypeptide reads, in one-letter code: Octanoyltransferase (231 aa).

The BPL/LPL catalytic domain occupies 49-227 (PHLPEAVWLL…ALAARFHLAW (179 aa)). Substrate contacts are provided by residues 91–98 (RGGEVTHH), 158–160 (AIG), and 171–173 (GLA). C189 serves as the catalytic Acyl-thioester intermediate.

It belongs to the LipB family.

It is found in the cytoplasm. It catalyses the reaction octanoyl-[ACP] + L-lysyl-[protein] = N(6)-octanoyl-L-lysyl-[protein] + holo-[ACP] + H(+). It functions in the pathway protein modification; protein lipoylation via endogenous pathway; protein N(6)-(lipoyl)lysine from octanoyl-[acyl-carrier-protein]: step 1/2. In terms of biological role, catalyzes the transfer of endogenously produced octanoic acid from octanoyl-acyl-carrier-protein onto the lipoyl domains of lipoate-dependent enzymes. Lipoyl-ACP can also act as a substrate although octanoyl-ACP is likely to be the physiological substrate. This Parasynechococcus marenigrum (strain WH8102) protein is Octanoyltransferase.